A 566-amino-acid chain; its full sequence is MGTSSGSNLPHQMLPPRQQLQTSLSLVSSDPHLSRSNSGIVRESPAESASSQETWPTSKSIMGRKTDSGKTGPDSHDQHVIRHVSIADKVSLRDIARERLDIVAERMHRLPEEYLEELKNGLKAILEGNGAQPIDEFMFLQKFVQTRSDLTSKTLVRAHRVQLEVLVVINTGIQAFLHPNINLSQSSLIEIFVYKRCRNIACQNELPADGCPCEICANRKGFCNLCMCVICNKFDFAVNTCRWIGCDVCSHWTHTDCAIRDGEISMGVSPKSVSGMGEMLFKCRACNHTSELLGWVKDVFQHCAPNWDRESLMKELDFVSRIFRGSEDTRGRKLFWKCEELMEKIKGGLAEATAAKLILMFFQEIELDSPKSLESGEGGGTIAPQDACNRIAEVVKETLRKMEIVGEEKTRMYKKARMGLEECEREVEEKAKQVAELQMERQKKKQQIEEVERIVRLKQAEAEMFQLKANEAKVEAERLERIVKAKKEKTEEEYASNYLKLRLSEAEAEKEYLFEKIKEQESGGNGGEASQAVMYSKIREMLHGYNASSPRVDPRSNQRNPFRSNP.

Residues 1 to 10 (MGTSSGSNLP) show a composition bias toward polar residues. The interval 1–79 (MGTSSGSNLP…KTGPDSHDQH (79 aa)) is disordered. Positions 18 to 29 (QQLQTSLSLVSS) are enriched in low complexity. Over residues 47 to 60 (ESASSQETWPTSKS) the composition is skewed to polar residues. The segment covering 64–79 (RKTDSGKTGPDSHDQH) has biased composition (basic and acidic residues). The PHD-type zinc-finger motif lies at 225 to 289 (LCMCVICNKF…LFKCRACNHT (65 aa)). A coiled-coil region spans residues 407–522 (EEKTRMYKKA…LFEKIKEQES (116 aa)). Residues 545 to 566 (YNASSPRVDPRSNQRNPFRSNP) are disordered. Over residues 555–566 (RSNQRNPFRSNP) the composition is skewed to polar residues.

Self-interacts. Interacts with OBE2, OBE3 and OBE4. Binds to VPg of pea seed borne mosaic virus (PSbMV), turnip mosaic virus (TuMV) and lettuce mosaic virus (LMV), but not with VPg of tobacco etch virus (TEV), cowpea mosaic virus (CPMV), tomato black ring virus (TBRV) and grapevine fan leaf virus (GFLV). Interacts with RBL. In terms of tissue distribution, expressed in roots, seedlings, stems, leaves, flowers and siliques, especially in the vasculature.

It is found in the nucleus. The protein localises to the nucleoplasm. Probable transcription factor that acts together with OBE2 for the maintenance and/or establishment of both the shoot and root meristems, probably by controlling the expression of the meristem genes such as WUS, PLT1 and PLT2 and of genes required for auxin responses. Promotes cell meristematic activity via the WUSCHEL-CLAVATA pathway. Involved in the development of the basal pole and in auxin-mediated root and vascular development in the embryo. Confers sensitivity to turnip mosaic virus (TuMV) probably by promoting viral movement and multiplication via interaction with TuMV VPg. The chain is Protein OBERON 1 from Arabidopsis thaliana (Mouse-ear cress).